The primary structure comprises 893 residues: MDHHYDPQQTNDYMQPEEDWDRDLLLDPAWEKQQRKTFTAWCNSHLRKAGTQIENIEEDFRDGLKLMLLLEVISGERLAKPERGKMRVHKISNVNKALDFIASKGVKLVSIGAEEIVDGNVKMTLGMIWTIILRFAIQDISVEETSAKEGLLLWCQRKTAPYKNVNIQNFHISWKDGLGFCALIHRHRPELIDYGKLRKDDPLTNLNTAFDVAEKYLDIPKMLDAEDIVGTARPDEKAIMTYVSSFYHAFSGAQKAETAANRICKVLAVNQENEQLMEDYEKLASDLLEWIRRTIPWLENRAPENTMQAMQQKLEDFRDYRRLHKPPKVQEKCQLEINFNTLQTKLRLSNRPAFMPSEGKMVSDINNAWGGLEQAEKGYEEWLLNEIRRLERLDHLAEKFRQKASIHESWTDGKEAMLQQKDYETATLSEIKALLKKHEAFESDLAAHQDRVEQIAAIAQELNELDYYDSPSVNARCQKICDQWDNLGALTQKRREALERTEKLLETIDQLYLEYAKRAAPFNNWMEGAMEDLQDTFIVHTIEEIQGLTTAHEQFKATLPDADKERQAILGIHNEVSKIVQTYHVNMAGTNPYTTITPQEINGKWEHVRQLVPRRDQALMEEHARQQQNERLRKQFGAQANVIGPWIQTKMEEIGRISIEMHGTLEDQLNHLRQYEKSIVNYKPKIDQLEGDHQQIQEALIFDNKHTNYTMEHIRVGWEQLLTTIARTINEVENQILTRDAKGISQEQMNEFRASFNHFDRDHSGTLGPEEFKACLISLGYDIGNDAQGEAEFARIMSIVDPNRMGVVTFQAFIDFMSRETADTDTADQVMASFKILAGDKNYITVDELRRELPPDQAEYCIARMAPYNGRDAVPGALDYMSFSTALYGESDL.

The tract at residues 1-248 (MDHHYDPQQT…IMTYVSSFYH (248 aa)) is actin-binding. At Tyr-13 the chain carries Phosphotyrosine; by FAK1. Calponin-homology (CH) domains follow at residues 32 to 136 (KQQR…LRFA) and 145 to 251 (TSAK…HAFS). Spectrin repeat units lie at residues 275 to 385 (QLME…WLLN), 395 to 500 (HLAE…ALER), 510 to 621 (QLYL…ALME), and 631 to 734 (RLRK…EVEN). EF-hand domains follow at residues 747–782 (EQMN…LGYD) and 788–823 (QGEA…ETAD). Residues Asp-760, Asp-762, Ser-764, Thr-766, and Glu-771 each contribute to the Ca(2+) site.

The protein belongs to the alpha-actinin family. Homodimer; antiparallel. Interacts with PDLIM4 (via PDZ domain).

The protein localises to the cytoplasm. It is found in the cytoskeleton. Its subcellular location is the myofibril. It localises to the sarcomere. The protein resides in the z line. The protein localises to the cell membrane. It is found in the cell junction. Its subcellular location is the cell projection. It localises to the ruffle. Functionally, F-actin cross-linking protein is thought to anchor actin to a variety of intracellular structures. This is a bundling protein. In Gallus gallus (Chicken), this protein is Alpha-actinin-1 (ACTN1).